Here is a 168-residue protein sequence, read N- to C-terminus: MAVLEILSIPDPRLKVKAEKVTDVSTIQTLIDDMLETLYATGNGIGLASTQVGRKEAVVVIDISDERNDPLILVNPEVVSGENKALGQEGCLSVPEYYADVERYTSVVVSALDRDGNPITIESDEFLAIVMQHEIDHLSGNLFIDYLSPLKQKMAMKKVKKYVKAQAK.

The Fe cation site is built by cysteine 91 and histidine 133. The active site involves glutamate 134. A Fe cation-binding site is contributed by histidine 137.

It belongs to the polypeptide deformylase family. Requires Fe(2+) as cofactor.

It carries out the reaction N-terminal N-formyl-L-methionyl-[peptide] + H2O = N-terminal L-methionyl-[peptide] + formate. In terms of biological role, removes the formyl group from the N-terminal Met of newly synthesized proteins. Requires at least a dipeptide for an efficient rate of reaction. N-terminal L-methionine is a prerequisite for activity but the enzyme has broad specificity at other positions. The polypeptide is Peptide deformylase 2 (Vibrio parahaemolyticus serotype O3:K6 (strain RIMD 2210633)).